The primary structure comprises 209 residues: Large ribosomal subunit protein uL4 (209 aa).

The disordered stretch occupies residues 46–76 (RGTASTKTRGEVSGGGRKPWRQKGTGRARHG). The span at 63–76 (KPWRQKGTGRARHG) shows a compositional bias: basic residues.

This sequence belongs to the universal ribosomal protein uL4 family. Part of the 50S ribosomal subunit.

Its function is as follows. One of the primary rRNA binding proteins, this protein initially binds near the 5'-end of the 23S rRNA. It is important during the early stages of 50S assembly. It makes multiple contacts with different domains of the 23S rRNA in the assembled 50S subunit and ribosome. In terms of biological role, forms part of the polypeptide exit tunnel. In Halothermothrix orenii (strain H 168 / OCM 544 / DSM 9562), this protein is Large ribosomal subunit protein uL4.